The sequence spans 95 residues: Orphan antitoxin ParD2 (95 aa).

In terms of biological role, antitoxin component of a non-functional type II toxin-antitoxin (TA system). Does not neutralize the effect of any of the RelE or ParE toxins. This Caulobacter vibrioides (strain ATCC 19089 / CIP 103742 / CB 15) (Caulobacter crescentus) protein is Orphan antitoxin ParD2 (parD2).